Reading from the N-terminus, the 369-residue chain is Ribonuclease D (369 aa).

One can recognise a 3'-5' exonuclease domain in the interval 4–168; it reads EIITTTAQLH…CLEKLQQQLE (165 aa). The 80-residue stretch at 207-286 folds into the HRDC domain; that stretch reads DRQGLAIIKA…TQVISQDEST (80 aa).

It belongs to the RNase D family. It depends on a divalent metal cation as a cofactor.

The protein resides in the cytoplasm. It carries out the reaction Exonucleolytic cleavage that removes extra residues from the 3'-terminus of tRNA to produce 5'-mononucleotides.. Exonuclease involved in the 3' processing of various precursor tRNAs. Initiates hydrolysis at the 3'-terminus of an RNA molecule and releases 5'-mononucleotides. The chain is Ribonuclease D from Psychromonas ingrahamii (strain DSM 17664 / CCUG 51855 / 37).